Here is a 248-residue protein sequence, read N- to C-terminus: Transcription termination/antitermination protein NusG (248 aa).

The 31-residue stretch at 197-227 (KGDQVRVIEGPFMNFTGTVEEVHPEKRKLTV) folds into the KOW domain.

Belongs to the NusG family. As to quaternary structure, monomer. Homodimer.

In terms of biological role, participates in transcription elongation, termination and antitermination. In Aquifex aeolicus (strain VF5), this protein is Transcription termination/antitermination protein NusG.